Here is a 110-residue protein sequence, read N- to C-terminus: Phosphoribosyl-ATP pyrophosphatase (110 aa).

The protein belongs to the PRA-PH family.

The protein resides in the cytoplasm. The catalysed reaction is 1-(5-phospho-beta-D-ribosyl)-ATP + H2O = 1-(5-phospho-beta-D-ribosyl)-5'-AMP + diphosphate + H(+). The protein operates within amino-acid biosynthesis; L-histidine biosynthesis; L-histidine from 5-phospho-alpha-D-ribose 1-diphosphate: step 2/9. This Clostridium botulinum (strain ATCC 19397 / Type A) protein is Phosphoribosyl-ATP pyrophosphatase.